A 411-amino-acid chain; its full sequence is Nuclear receptor subfamily 2 group F member 1-A (411 aa).

The interval 1 to 68 is disordered; the sequence is MAMVVSVWRD…AGDKGSQNSG (68 aa). A compositionally biased stretch (low complexity) spans 24 to 46; sequence NPAAQPAREQQQAASAAPHTPQT. The nuclear receptor DNA-binding region spans 73-148; that stretch reads HIECVVCGDK…VGMRREAVQR (76 aa). NR C4-type zinc fingers lie at residues 76–96 and 112–136; these read CVVCGDKSSGKHYGQFTCEGC and CRANRNCPIDQHHRNQCQYCRLKKC. The NR LBD domain occupies 174–400; it reads YLSGYISLLL…TLIRDMLLSG (227 aa).

The protein belongs to the nuclear hormone receptor family. NR2 subfamily. As to expression, first expressed in 11-12 hour embryos. In the rostral brain of 13 hour embryos, expressed within the anterior half of the midbrain and the posterior part of the diencephalon. In the presumptive hindbrain, expressed in a segment-like stripe in the anterior region, resembling the presumptive rhombomere units of the hindbrain. Also detected in the intermediate mesoderm, posterior to the first somite. As somitogenesis proceeds, expression extends posteriorly and flanks the 10 most anterior somites. Expression changes extensively both in level and expansion of domains between 13 and 20 hours. In the rostral brain, expression extends to include a major part of the diencephalon and a caudal portion of the telencephalon. Within the hindbrain, strongly expressed in the two most anterior rhombomeres, and a lower but uniform expression is seen to extend throughout rhombomere 7. In 28 hour embryos, higher and more uniform expression is seen in both rostral and hindbrain areas. Also expressed in the retina of the eye.

The protein resides in the nucleus. Its function is as follows. Putative transcription factor that is required in photoreceptor cells precursors during eye development. The chain is Nuclear receptor subfamily 2 group F member 1-A (nr2f1a) from Danio rerio (Zebrafish).